Reading from the N-terminus, the 416-residue chain is CinA-like protein (416 aa).

The protein belongs to the CinA family.

The sequence is that of CinA-like protein from Solibacter usitatus (strain Ellin6076).